A 284-amino-acid chain; its full sequence is 1D-myo-inositol 2-acetamido-2-deoxy-alpha-D-glucopyranoside deacetylase (284 aa).

Residues His12, Asp15, and His146 each coordinate Zn(2+).

The protein belongs to the MshB deacetylase family. Zn(2+) is required as a cofactor.

The enzyme catalyses 1D-myo-inositol 2-acetamido-2-deoxy-alpha-D-glucopyranoside + H2O = 1D-myo-inositol 2-amino-2-deoxy-alpha-D-glucopyranoside + acetate. Catalyzes the deacetylation of 1D-myo-inositol 2-acetamido-2-deoxy-alpha-D-glucopyranoside (GlcNAc-Ins) in the mycothiol biosynthesis pathway. This chain is 1D-myo-inositol 2-acetamido-2-deoxy-alpha-D-glucopyranoside deacetylase, found in Mycolicibacterium vanbaalenii (strain DSM 7251 / JCM 13017 / BCRC 16820 / KCTC 9966 / NRRL B-24157 / PYR-1) (Mycobacterium vanbaalenii).